The primary structure comprises 534 residues: CTP synthase (534 aa).

The interval 1 to 267 (MTKYIFVTGG…DQIVCDHLKL (267 aa)) is amidoligase domain. Ser-13 lines the CTP pocket. Ser-13 is a binding site for UTP. 14-19 (SIGKGI) contacts ATP. Tyr-54 contacts L-glutamine. Asp-71 serves as a coordination point for ATP. 2 residues coordinate Mg(2+): Asp-71 and Glu-141. CTP-binding positions include 148-150 (DIE), 188-193 (KTKPTQ), and Lys-224. UTP contacts are provided by residues 188–193 (KTKPTQ) and Lys-224. The 243-residue stretch at 292–534 (KIALVGKYVE…FVTAAVENMK (243 aa)) folds into the Glutamine amidotransferase type-1 domain. Gly-354 provides a ligand contact to L-glutamine. Residue Cys-381 is the Nucleophile; for glutamine hydrolysis of the active site. L-glutamine is bound by residues 382 to 385 (LGMQ), Glu-405, and Arg-463. Catalysis depends on residues His-508 and Glu-510.

The protein belongs to the CTP synthase family. In terms of assembly, homotetramer.

The catalysed reaction is UTP + L-glutamine + ATP + H2O = CTP + L-glutamate + ADP + phosphate + 2 H(+). It catalyses the reaction L-glutamine + H2O = L-glutamate + NH4(+). The enzyme catalyses UTP + NH4(+) + ATP = CTP + ADP + phosphate + 2 H(+). It participates in pyrimidine metabolism; CTP biosynthesis via de novo pathway; CTP from UDP: step 2/2. Allosterically activated by GTP, when glutamine is the substrate; GTP has no effect on the reaction when ammonia is the substrate. The allosteric effector GTP functions by stabilizing the protein conformation that binds the tetrahedral intermediate(s) formed during glutamine hydrolysis. Inhibited by the product CTP, via allosteric rather than competitive inhibition. Functionally, catalyzes the ATP-dependent amination of UTP to CTP with either L-glutamine or ammonia as the source of nitrogen. Regulates intracellular CTP levels through interactions with the four ribonucleotide triphosphates. The protein is CTP synthase of Streptococcus agalactiae serotype Ia (strain ATCC 27591 / A909 / CDC SS700).